A 599-amino-acid chain; its full sequence is Elongation factor 4 (599 aa).

Positions 4–186 (KFIRNFSIIA…AIIKHVPPPL (183 aa)) constitute a tr-type G domain. GTP-binding positions include 16–21 (DHGKST) and 133–136 (NKID).

The protein belongs to the TRAFAC class translation factor GTPase superfamily. Classic translation factor GTPase family. LepA subfamily.

Its subcellular location is the cell membrane. It carries out the reaction GTP + H2O = GDP + phosphate + H(+). In terms of biological role, required for accurate and efficient protein synthesis under certain stress conditions. May act as a fidelity factor of the translation reaction, by catalyzing a one-codon backward translocation of tRNAs on improperly translocated ribosomes. Back-translocation proceeds from a post-translocation (POST) complex to a pre-translocation (PRE) complex, thus giving elongation factor G a second chance to translocate the tRNAs correctly. Binds to ribosomes in a GTP-dependent manner. The polypeptide is Elongation factor 4 (Ureaplasma urealyticum serovar 10 (strain ATCC 33699 / Western)).